Here is a 601-residue protein sequence, read N- to C-terminus: Coronin-like protein crn1 (601 aa).

5 WD repeats span residues Gly79 to Glu119, Gly132 to Ser172, Lys174 to Val213, Ala220 to Gly260, and Asp266 to Leu306. Disordered stretches follow at residues Ser361–Gln386 and Ser407–Lys540. Basic and acidic residues-rich tracts occupy residues Lys419 to Lys429, Lys437 to Val453, and Lys462 to Phe495. A phosphoserine mark is found at Ser500 and Ser501. Residues Glu507–Pro526 show a composition bias toward basic and acidic residues. Ser553 is subject to Phosphoserine. Residues Asn556–Cys600 are a coiled coil.

The protein belongs to the WD repeat coronin family. In terms of assembly, binds to F-actin.

The sequence is that of Coronin-like protein crn1 (crn1) from Schizosaccharomyces pombe (strain 972 / ATCC 24843) (Fission yeast).